A 217-amino-acid chain; its full sequence is UPF0111 protein MTH_1689 (217 aa).

Belongs to the UPF0111 family.

This is UPF0111 protein MTH_1689 from Methanothermobacter thermautotrophicus (strain ATCC 29096 / DSM 1053 / JCM 10044 / NBRC 100330 / Delta H) (Methanobacterium thermoautotrophicum).